The following is a 164-amino-acid chain: UPF0304 protein YfbU (164 aa).

It belongs to the UPF0304 family.

In Escherichia coli O127:H6 (strain E2348/69 / EPEC), this protein is UPF0304 protein YfbU.